The primary structure comprises 432 residues: Asparagine--tRNA ligase (432 aa).

It belongs to the class-II aminoacyl-tRNA synthetase family. In terms of assembly, homodimer.

The protein resides in the cytoplasm. It carries out the reaction tRNA(Asn) + L-asparagine + ATP = L-asparaginyl-tRNA(Asn) + AMP + diphosphate + H(+). The sequence is that of Asparagine--tRNA ligase from Limosilactobacillus reuteri (strain DSM 20016) (Lactobacillus reuteri).